A 379-amino-acid polypeptide reads, in one-letter code: Peritrophin-48 (379 aa).

Positions 1–20 (MKAKTLTATLALILLAFAQA) are cleaved as a signal peptide. Chitin-binding type-2 domains lie at 25-83 (ASYC…NCFF) and 86-143 (ANPC…NTGN). Disulfide bonds link Cys-60-Cys-73 and Cys-120-Cys-133. Asn-150 and Asn-168 each carry an N-linked (GlcNAc...) asparagine glycan. Chitin-binding type-2 domains are found at residues 151 to 208 (LSVC…ACSR), 224 to 283 (TSPC…RTLK), and 285 to 356 (CNRC…ACEN). A disulfide bridge links Cys-185 with Cys-198. Residues Asn-247 and Asn-252 are each glycosylated (N-linked (GlcNAc...) asparagine). The cysteines at positions 324 and 337 are disulfide-linked. N-linked (GlcNAc...) asparagine glycans are attached at residues Asn-341, Asn-356, and Asn-373.

Glycosylated. In terms of tissue distribution, larval peritrophic membrane.

Its function is as follows. Binds chitin and may bind related oligosaccharide structures. The polypeptide is Peritrophin-48 (Chrysomya bezziana (Old world screw-worm fly)).